Consider the following 119-residue polypeptide: Acidic phospholipase A2 CM-II (119 aa).

Intrachain disulfides connect Cys11–Cys71, Cys26–Cys118, Cys28–Cys44, Cys43–Cys99, Cys50–Cys92, Cys60–Cys85, and Cys78–Cys90. The Ca(2+) site is built by Phe27, Gly29, and Gly31. His47 is an active-site residue. Residue Asp48 participates in Ca(2+) binding. The active site involves Asp93.

The protein belongs to the phospholipase A2 family. Group I subfamily. D49 sub-subfamily. Ca(2+) is required as a cofactor. Expressed by the venom gland.

Its subcellular location is the secreted. It catalyses the reaction a 1,2-diacyl-sn-glycero-3-phosphocholine + H2O = a 1-acyl-sn-glycero-3-phosphocholine + a fatty acid + H(+). PLA2 catalyzes the calcium-dependent hydrolysis of the 2-acyl groups in 3-sn-phosphoglycerides. The sequence is that of Acidic phospholipase A2 CM-II from Aspidelaps scutatus (Shield-nose snake).